The following is a 571-amino-acid chain: Dihydroxy-acid dehydratase (571 aa).

A [2Fe-2S] cluster-binding site is contributed by Cys56. Asp88 lines the Mg(2+) pocket. Cys129 contributes to the [2Fe-2S] cluster binding site. Mg(2+) contacts are provided by Asp130 and Lys131. Lys131 is subject to N6-carboxylysine. Cys201 is a binding site for [2Fe-2S] cluster. Glu452 provides a ligand contact to Mg(2+). Residue Ser478 is the Proton acceptor of the active site.

This sequence belongs to the IlvD/Edd family. As to quaternary structure, homodimer. [2Fe-2S] cluster serves as cofactor. Requires Mg(2+) as cofactor.

The enzyme catalyses (2R)-2,3-dihydroxy-3-methylbutanoate = 3-methyl-2-oxobutanoate + H2O. It catalyses the reaction (2R,3R)-2,3-dihydroxy-3-methylpentanoate = (S)-3-methyl-2-oxopentanoate + H2O. It participates in amino-acid biosynthesis; L-isoleucine biosynthesis; L-isoleucine from 2-oxobutanoate: step 3/4. Its pathway is amino-acid biosynthesis; L-valine biosynthesis; L-valine from pyruvate: step 3/4. Its function is as follows. Functions in the biosynthesis of branched-chain amino acids. Catalyzes the dehydration of (2R,3R)-2,3-dihydroxy-3-methylpentanoate (2,3-dihydroxy-3-methylvalerate) into 2-oxo-3-methylpentanoate (2-oxo-3-methylvalerate) and of (2R)-2,3-dihydroxy-3-methylbutanoate (2,3-dihydroxyisovalerate) into 2-oxo-3-methylbutanoate (2-oxoisovalerate), the penultimate precursor to L-isoleucine and L-valine, respectively. The polypeptide is Dihydroxy-acid dehydratase (Streptococcus suis (strain 98HAH33)).